The sequence spans 105 residues: Replication initiation control protein YabA (105 aa).

Residues His79, Cys81, Cys95, and Cys98 each coordinate Zn(2+).

It belongs to the YabA family. In terms of assembly, homotetramer. Interacts with both DnaA and DnaN, acting as a bridge between these two proteins. It depends on Zn(2+) as a cofactor.

Its subcellular location is the cytoplasm. The protein resides in the nucleoid. In terms of biological role, involved in control of chromosome replication initiation. Inhibits the cooperative binding of DnaA to the oriC region, thus negatively regulating initiation of chromosome replication. Inhibits the ability of DnaA-ATP to form a helix on DNA; does not disassemble preformed DnaA-DNA helices. Decreases the residence time of DnaA on the chromosome at its binding sites (oriC, replication forks and promoter-binding sites). Tethers DnaA to the replication machinery via the DNA polymerase beta sliding clamp subunit (dnaN). Associates with oriC and other DnaA targets on the chromosome in a DnaA-dependent manner. This Streptococcus sanguinis (strain SK36) protein is Replication initiation control protein YabA.